Here is a 415-residue protein sequence, read N- to C-terminus: Heterogeneous nuclear ribonucleoprotein F (415 aa).

Methionine 1 is modified (N-acetylmethionine). At methionine 2 the chain carries N-acetylmethionine; in Heterogeneous nuclear ribonucleoprotein F, N-terminally processed. Positions 13 to 85 (VKLRGLPWSC…ESMGHRYIEV (73 aa)) constitute an RRM 1 domain. A Glycyl lysine isopeptide (Lys-Gly) (interchain with G-Cter in SUMO) cross-link involves residue lysine 72. Positions 81–86 (RYIEVF) are interaction with RNA. Lysine 87 participates in a covalent cross-link: Glycyl lysine isopeptide (Lys-Gly) (interchain with G-Cter in SUMO2). Phosphoserine occurs at positions 104, 107, and 161. Residues 111–188 (GFVRLRGLPF…RYIEVFKSSQ (78 aa)) form the RRM 2 domain. A Glycyl lysine isopeptide (Lys-Gly) (interchain with G-Cter in SUMO2) cross-link involves residue lysine 167. An interaction with RNA region spans residues 179 to 184 (RYIEVF). A Glycyl lysine isopeptide (Lys-Gly) (interchain with G-Cter in SUMO2) cross-link involves residue lysine 185. Serine 187, serine 193, and serine 195 each carry phosphoserine. Lysine 200 is subject to N6-acetyllysine; alternate. Lysine 200 participates in a covalent cross-link: Glycyl lysine isopeptide (Lys-Gly) (interchain with G-Cter in SUMO2); alternate. Threonine 215 is modified (phosphothreonine). Lysine 224 carries the post-translational modification N6-acetyllysine; alternate. Lysine 224 participates in a covalent cross-link: Glycyl lysine isopeptide (Lys-Gly) (interchain with G-Cter in SUMO2); alternate. Residue serine 265 is modified to Phosphoserine. Positions 289–366 (HCVHMRGLPY…IELFLNSTTG (78 aa)) constitute an RRM 3 domain. The tract at residues 355 to 360 (RYIELF) is interaction with RNA.

Identified in the spliceosome C complex. Interacts with AGO1, AGO2, TBP and TXNL4/DIM1. Sumoylated.

The protein localises to the nucleus. It is found in the nucleoplasm. In terms of biological role, component of the heterogeneous nuclear ribonucleoprotein (hnRNP) complexes which provide the substrate for the processing events that pre-mRNAs undergo before becoming functional, translatable mRNAs in the cytoplasm. Plays a role in the regulation of alternative splicing events. Binds G-rich sequences in pre-mRNAs and keeps target RNA in an unfolded state. This Macaca fascicularis (Crab-eating macaque) protein is Heterogeneous nuclear ribonucleoprotein F (HNRNPF).